We begin with the raw amino-acid sequence, 220 residues long: Elongation factor Ts (220 aa).

The segment at Thr-83–Val-86 is involved in Mg(2+) ion dislocation from EF-Tu.

Belongs to the EF-Ts family.

The protein resides in the cytoplasm. In terms of biological role, associates with the EF-Tu.GDP complex and induces the exchange of GDP to GTP. It remains bound to the aminoacyl-tRNA.EF-Tu.GTP complex up to the GTP hydrolysis stage on the ribosome. The protein is Elongation factor Ts of Synechococcus sp. (strain CC9605).